The primary structure comprises 207 residues: Na(+)-translocating NADH-quinone reductase subunit D (207 aa).

6 helical membrane-spanning segments follow: residues 20 to 40, 41 to 61, 69 to 89, 102 to 122, 130 to 150, and 177 to 197; these read IALQ…LQTA, FVMA…ISMI, IRII…DQIL, VFVG…AFAM, FVDG…VAFL, and NGLF…IWAI.

It belongs to the NqrDE/RnfAE family. In terms of assembly, composed of six subunits; NqrA, NqrB, NqrC, NqrD, NqrE and NqrF.

Its subcellular location is the cell inner membrane. It carries out the reaction a ubiquinone + n Na(+)(in) + NADH + H(+) = a ubiquinol + n Na(+)(out) + NAD(+). Functionally, NQR complex catalyzes the reduction of ubiquinone-1 to ubiquinol by two successive reactions, coupled with the transport of Na(+) ions from the cytoplasm to the periplasm. NqrA to NqrE are probably involved in the second step, the conversion of ubisemiquinone to ubiquinol. The chain is Na(+)-translocating NADH-quinone reductase subunit D from Haemophilus ducreyi (strain 35000HP / ATCC 700724).